We begin with the raw amino-acid sequence, 173 residues long: Alpha-crystallin A chain (173 aa).

An N-acetylmethionine modification is found at Met1. Residues 1-63 (MDITIQHPWF…RTVLESGISE (63 aa)) form a required for complex formation with BFSP1 and BFSP2 region. At Gln6 the chain carries Deamidated glutamine; partial. The residue at position 45 (Ser45) is a Phosphoserine. Deamidated glutamine; partial is present on Gln50. The region spanning 52 to 164 (LFRTVLESGI…SDRSIPVSRE (113 aa)) is the sHSP domain. N6-acetyllysine is present on residues Lys70 and Lys99. His100, Glu102, and His107 together coordinate Zn(2+). A Phosphoserine modification is found at Ser122. Asn123 bears the Deamidated asparagine; partial mark. Basic and acidic residues predominate over residues 146-167 (IHSDMDASHSDRSIPVSREEKP). The disordered stretch occupies residues 146-173 (IHSDMDASHSDRSIPVSREEKPTLAPSS). His154 is a Zn(2+) binding site. The O-linked (GlcNAc) serine glycan is linked to Ser162.

The protein belongs to the small heat shock protein (HSP20) family. Heteromer composed of three CRYAA and one CRYAB subunits. Inter-subunit bridging via zinc ions enhances stability, which is crucial as there is no protein turn over in the lens. Can also form homodimers and homotetramers (dimers of dimers) which serve as the building blocks of homooligomers. Within homooligomers, the zinc-binding motif is created from residues of 3 different molecules. His-100 and Glu-102 from one molecule are ligands of the zinc ion, and His-107 and His-154 residues from additional molecules complete the site with tetrahedral coordination geometry. Part of a complex required for lens intermediate filament formation composed of BFSP1, BFSP2 and CRYAA. In terms of processing, acetylation at Lys-70 may increase chaperone activity. Post-translationally, undergoes age-dependent proteolytical cleavage at the C-terminus.

The protein localises to the cytoplasm. The protein resides in the nucleus. In terms of biological role, contributes to the transparency and refractive index of the lens. Acts as a chaperone, preventing aggregation of various proteins under a wide range of stress conditions. Required for the correct formation of lens intermediate filaments as part of a complex composed of BFSP1, BFSP2 and CRYAA. The protein is Alpha-crystallin A chain (CRYAA) of Osphranter rufus (Red kangaroo).